A 287-amino-acid polypeptide reads, in one-letter code: Lycopene elongase/hydratase (287 aa).

The next 7 helical transmembrane spans lie at 15-35 (ISWINTAYPFGLAYLLNAGEI), 37-57 (WLFWLGIVFFLIPYNIAMYGI), 87-107 (TLLWASAISTIPFLVILFIFG), 137-157 (FIDALTSSTHFTSPALIGATI), 166-186 (MWIALGSFFLWGMASQILGAV), 218-238 (LLAAVLVTTLPNPAWIIGIAI), and 265-285 (VFLWLNYFVGAVITILLIAIH).

This sequence belongs to the UbiA prenyltransferase family.

The protein resides in the cell membrane. The enzyme catalyses all-trans-lycopene + dimethylallyl diphosphate + A + H2O = nonaflavuxanthin + AH2 + diphosphate. The catalysed reaction is nonaflavuxanthin + dimethylallyl diphosphate + A + H2O = flavuxanthin + AH2 + diphosphate. Its pathway is carotenoid biosynthesis. In terms of biological role, catalyzes the elongation of the C(40) carotenoid all-trans-lycopene to the acyclic C(50) carotenoid flavuxanthin during decaprenoxanthin biosynthesis. Acts as a bifunctional enzyme that catalyzes the elongation of lycopene by attaching a C(5) isoprene unit at C-2, as well as the hydroxylation of the new isoprene unit. The enzyme acts at both ends of the substrate, forming the C(50) carotenoid flavuxanthin via the C(45) intermediate nonaflavuxanthin. The protein is Lycopene elongase/hydratase of Corynebacterium glutamicum (strain ATCC 13032 / DSM 20300 / JCM 1318 / BCRC 11384 / CCUG 27702 / LMG 3730 / NBRC 12168 / NCIMB 10025 / NRRL B-2784 / 534).